We begin with the raw amino-acid sequence, 606 residues long: Putative helicase 172L (606 aa).

In terms of domain architecture, Helicase ATP-binding spans 59-264 (GEKTWGVRGG…WAQLRFCGYK (206 aa)). 72–79 (LCMGLGKT) provides a ligand contact to ATP. One can recognise a Helicase C-terminal domain in the interval 437-586 (YIKSSNFEIS…ASYLEGKERI (150 aa)).

This sequence belongs to the SNF2/RAD54 helicase family.

This chain is Putative helicase 172L, found in Invertebrate iridescent virus 6 (IIV-6).